We begin with the raw amino-acid sequence, 157 residues long: Transcriptional repressor NrdR (157 aa).

Residues 3 to 34 (CPFCGHAESQVKDSRPSEDGAAIRRRRMCPEC) fold into a zinc finger. The ATP-cone domain occupies 49–139 (LIIVKRSGRR…VYRDFKETSD (91 aa)).

It belongs to the NrdR family. Requires Zn(2+) as cofactor.

Functionally, negatively regulates transcription of bacterial ribonucleotide reductase nrd genes and operons by binding to NrdR-boxes. In Caulobacter vibrioides (strain ATCC 19089 / CIP 103742 / CB 15) (Caulobacter crescentus), this protein is Transcriptional repressor NrdR.